We begin with the raw amino-acid sequence, 144 residues long: Actin-associated protein FAM107A (144 aa).

Residues E66–K112 adopt a coiled-coil conformation. The short motif at R74–K84 is the Nuclear localization signal element. The tract at residues Q105–F124 is disordered. The segment covering K112–F124 has biased composition (basic and acidic residues).

Belongs to the FAM107 family. Interacts with ACTB. Interacts with COMMD1; this interaction stabilizes COMMD1 in the nucleus. Interacts with MAP1A. Interacts with PRDX1. Interacts with F-actin. Widely expressed. Expressed in neurons. Expressed in malignant glial tumors. Expression is reduced or absent in a number of cancer cell lines.

The protein localises to the nucleus. The protein resides in the cytoplasm. It is found in the cytoskeleton. Its subcellular location is the stress fiber. It localises to the cell junction. The protein localises to the focal adhesion. The protein resides in the cell projection. It is found in the ruffle membrane. Its subcellular location is the synapse. In terms of biological role, stress-inducible actin-binding protein that plays a role in synaptic and cognitive functions by modulating actin filamentous (F-actin) dynamics. Mediates polymerization of globular actin to F-actin. Also binds to, stabilizes and bundles F-actin. Involved in synaptic function by regulating neurite outgrowth in an actin-dependent manner and for the acquisition of hippocampus-dependent cognitive function, such as learning and long-term memory. Plays a role in the actin and microtubule cytoskeleton organization; negatively regulates focal adhesion (FA) assembly promoting malignant glial cell migration in an actin-, microtubule- and MAP1A-dependent manner. Also involved in neuroblastoma G1/S phase cell cycle progression and cell proliferation inhibition by stimulating ubiquitination of NF-kappa-B subunit RELA and NF-kappa-B degradation in a COMMD1- and actin-dependent manner. May play a role in tumor development. The chain is Actin-associated protein FAM107A from Homo sapiens (Human).